We begin with the raw amino-acid sequence, 201 residues long: Potassium-transporting ATPase KdpC subunit (201 aa).

A helical membrane pass occupies residues 12 to 34; the sequence is LLALTMITGLAYPLAVTGLATVL. Positions 69 to 102 are disordered; the sequence is RPSATVAPDPADSSKTVSAPYNAANSGGSNLGPT. The segment covering 81–101 has biased composition (polar residues); the sequence is SSKTVSAPYNAANSGGSNLGP.

This sequence belongs to the KdpC family. In terms of assembly, the system is composed of three essential subunits: KdpA, KdpB and KdpC.

It localises to the cell inner membrane. Part of the high-affinity ATP-driven potassium transport (or Kdp) system, which catalyzes the hydrolysis of ATP coupled with the electrogenic transport of potassium into the cytoplasm. This subunit acts as a catalytic chaperone that increases the ATP-binding affinity of the ATP-hydrolyzing subunit KdpB by the formation of a transient KdpB/KdpC/ATP ternary complex. This is Potassium-transporting ATPase KdpC subunit from Rhodopseudomonas palustris (strain TIE-1).